A 72-amino-acid polypeptide reads, in one-letter code: Omega-conotoxin-like SVIA mutant 1 (72 aa).

An N-terminal signal peptide occupies residues 1-22 (MKLTCVVIVAVLLLTACQLITA). Positions 23–48 (EDSRGAQKHRTLRSTARRSKSELTTR) are excised as a propeptide. Intrachain disulfides connect cysteine 49–cysteine 63, cysteine 56–cysteine 66, and cysteine 62–cysteine 71. Residue proline 55 is modified to 4-hydroxyproline.

Belongs to the conotoxin O1 superfamily. In terms of tissue distribution, expressed by the venom duct.

Its subcellular location is the secreted. In terms of biological role, omega-conotoxins act at presynaptic membranes, they bind and block voltage-gated calcium channels (Cav). In Conus striatus (Striated cone), this protein is Omega-conotoxin-like SVIA mutant 1.